The chain runs to 286 residues: Bifunctional protein FolD (286 aa).

NADP(+) contacts are provided by residues 166-168 (GRS) and Ser-191.

The protein belongs to the tetrahydrofolate dehydrogenase/cyclohydrolase family. In terms of assembly, homodimer.

The enzyme catalyses (6R)-5,10-methylene-5,6,7,8-tetrahydrofolate + NADP(+) = (6R)-5,10-methenyltetrahydrofolate + NADPH. The catalysed reaction is (6R)-5,10-methenyltetrahydrofolate + H2O = (6R)-10-formyltetrahydrofolate + H(+). It participates in one-carbon metabolism; tetrahydrofolate interconversion. Its function is as follows. Catalyzes the oxidation of 5,10-methylenetetrahydrofolate to 5,10-methenyltetrahydrofolate and then the hydrolysis of 5,10-methenyltetrahydrofolate to 10-formyltetrahydrofolate. This is Bifunctional protein FolD from Lactiplantibacillus plantarum (strain ATCC BAA-793 / NCIMB 8826 / WCFS1) (Lactobacillus plantarum).